Reading from the N-terminus, the 508-residue chain is Abl interactor 1 (508 aa).

Alanine 2 is modified (N-acetylalanine). A required for binding to WASF1 region spans residues 18 to 79 (ALIESYQNLT…NNVLQLLDIQ (62 aa)). A t-SNARE coiled-coil homology domain is found at 45–107 (KALEETKAYT…DIHKEKVARR (63 aa)). Phosphotyrosine is present on tyrosine 53. 3 disordered regions span residues 159–290 (KHGN…APPL), 306–375 (APGS…LTPQ), and 388–421 (NIAD…PVDY). Polar residues predominate over residues 161–175 (GNNQPARTGTLSRTN). Threonine 174 and threonine 178 each carry phosphothreonine. Residues serine 183 and serine 187 each carry the phosphoserine modification. Tyrosine 213 is modified (phosphotyrosine; by ABL1). Threonine 215 carries the post-translational modification Phosphothreonine. Phosphoserine occurs at positions 216, 222, and 225. Over residues 222–235 (SQHSPGRTASLNQR) the composition is skewed to polar residues. The segment covering 248–258 (SRENSGSSSIG) has biased composition (low complexity). Over residues 278-290 (VPPPSGAPPAPPL) the composition is skewed to pro residues. The span at 307 to 322 (PGSQYGTMTRQISRHN) shows a compositional bias: polar residues. 2 positions are modified to phosphoserine: serine 319 and serine 323. Positions 337-347 (PSVTAQFSAQP) are enriched in polar residues. 2 stretches are compositionally biased toward pro residues: residues 393-403 (PTPPPPPPPDD) and 410-419 (SPPPPPPPPV). Positions 446–505 (NYIEKVVAIYDYTKDKDDELSFMEGAIIYVIKKNDDGWYEGVCNRVTGLFPGNYVESIMH) constitute an SH3 domain. Tyrosine 455 carries the phosphotyrosine modification. At serine 466 the chain carries Phosphoserine. A Phosphothreonine modification is found at threonine 507.

Belongs to the ABI family. As to quaternary structure, interacts with ABL1, ENAH, STX1A, SNAP25, VAMP2, EPS8, and through its N-terminus with WASF1. Part of a complex consisting of ABI1, STX1A and SNAP25. Part of a complex consisting of ABI1, EPS8 and SOS1. Interacts with SOS1, SOS2, GRB2, SPTA1 and the first SH3 domain of NCK1. Isoform 6 does not interact with NCK1. Component of the WAVE2 complex composed of ABI1, CYFIP1/SRA1, NCKAP1/NAP1 (NCKAP1l/HEM1 in hematopoietic cells) and WASF2/WAVE2. Interacts (via SH3 domain) with SHANK2 and SHANK3, but not SHANK1; the interaction is direct. Interacts with the heterodimer MYC:MAX; the interaction may enhance MYC:MAX transcriptional activity. Interacts with FNBP1L (via the SH3 domain), WASF2, and CDC42, but only in the presence of FNBP1L. (Microbial infection) Interacts with human cytomegalovirus/HHV-5 protein UL135. In terms of processing, phosphorylated on tyrosine residues after serum stimulation or induction by v-Abl. Seems to be phosphorylated at Tyr-53 by ABL1, required for nuclear but not for synaptic localization. In terms of tissue distribution, widely expressed, with highest expression in brain.

It is found in the cytoplasm. The protein localises to the nucleus. It localises to the cell projection. Its subcellular location is the lamellipodium. The protein resides in the filopodium. It is found in the growth cone. The protein localises to the postsynaptic density. It localises to the cytoskeleton. In terms of biological role, may act in negative regulation of cell growth and transformation by interacting with nonreceptor tyrosine kinases ABL1 and/or ABL2. May play a role in regulation of EGF-induced Erk pathway activation. Involved in cytoskeletal reorganization and EGFR signaling. Together with EPS8 participates in transduction of signals from Ras to Rac. In vitro, a trimeric complex of ABI1, EPS8 and SOS1 exhibits Rac specific guanine nucleotide exchange factor (GEF) activity and ABI1 seems to act as an adapter in the complex. Regulates ABL1/c-Abl-mediated phosphorylation of ENAH. Recruits WASF1 to lamellipodia and there seems to regulate WASF1 protein level. In brain, seems to regulate the dendritic outgrowth and branching as well as to determine the shape and number of synaptic contacts of developing neurons. The protein is Abl interactor 1 of Homo sapiens (Human).